Consider the following 413-residue polypeptide: Clusterin-associated protein 1 (413 aa).

A coiled-coil region spans residues 198-291 (KTKDLLNNVA…ERFEEAKNTL (94 aa)). Residues 305–413 (LLKSGSNDDS…EPLDESDNDF (109 aa)) are disordered. Acidic residues-rich tracts occupy residues 312–328 (DDSD…DSEL) and 360–388 (DSDD…EDES). S314, S324, and S326 each carry phosphoserine. S409 is modified (phosphoserine).

Belongs to the CLUAP1 family. In terms of assembly, interacts with CLU/clusterin. Interacts with UBXN10; the interaction is direct. In terms of tissue distribution, expressed in testis, thyroid and trachea and to a lower extent in spinal cord and adrenal gland. Highly expressed in colon cancer and osteosarcoma cell lines.

It localises to the cell projection. Its subcellular location is the cilium. It is found in the nucleus. Its function is as follows. Required for cilia biogenesis. Appears to function within the multiple intraflagellar transport complex B (IFT-B). Key regulator of hedgehog signaling. This Homo sapiens (Human) protein is Clusterin-associated protein 1 (CLUAP1).